A 543-amino-acid chain; its full sequence is Ipecac alkaloid beta-glucosidase 2 (543 aa).

Residues Q36, H140, 185-186 (NE), Y350, E422, W471, and F487 contribute to the a beta-D-glucoside site. The Proton donor role is filled by E186. The Nucleophile role is filled by E422.

The protein belongs to the glycosyl hydrolase 1 family.

It localises to the cytoplasm. Its subcellular location is the cytosol. It carries out the reaction deacetylipecoside + H2O = deacetylipecoside aglycone + D-glucose. The catalysed reaction is deacetylisoipecoside + H2O = deacetylisoipecoside aglycone + D-glucose. The protein operates within alkaloid biosynthesis. In terms of biological role, beta-glucosidase catalyzing deglucosylation on N-deacetylisoipecoside and N-deacetylipecoside. This Carapichea ipecacuanha (Ipecac) protein is Ipecac alkaloid beta-glucosidase 2.